Here is a 373-residue protein sequence, read N- to C-terminus: DNA replication and repair protein RecF (373 aa).

Residue Gly-30–Thr-37 participates in ATP binding.

This sequence belongs to the RecF family.

It is found in the cytoplasm. Its function is as follows. The RecF protein is involved in DNA metabolism; it is required for DNA replication and normal SOS inducibility. RecF binds preferentially to single-stranded, linear DNA. It also seems to bind ATP. The polypeptide is DNA replication and repair protein RecF (Streptomyces avermitilis (strain ATCC 31267 / DSM 46492 / JCM 5070 / NBRC 14893 / NCIMB 12804 / NRRL 8165 / MA-4680)).